Reading from the N-terminus, the 1202-residue chain is Adenine-specific methyltransferase PglX (1202 aa).

It belongs to the methyltransferase superfamily. PglX adenine methyltransferase family.

The catalysed reaction is a 2'-deoxyadenosine in DNA + S-adenosyl-L-methionine = an N(6)-methyl-2'-deoxyadenosine in DNA + S-adenosyl-L-homocysteine + H(+). In terms of biological role, BREX systems (bacteriophage exclusion) provide immunity against bacteriophage. Part of a type 1 BREX system which protects against dsDNA phage. This system allows phage adsorption but prevents phage DNA replication, without degradation of the phage DNA. Methylation of bacterial DNA by this protein guides self/non-self discrimination. Functionally, probably methylates the adenine in the fifth position of the hexamer 5'-ACRCAG-3' in genomic DNA. N(6)-methylated adenine on the fifth position of 5'-ACRCAG-3' is found in the genome; there are 1906 sites in the genomic DNA. This is Adenine-specific methyltransferase PglX from Lacticaseibacillus casei (strain Zhang) (Lactobacillus casei).